The sequence spans 200 residues: dITP/XTP pyrophosphatase (200 aa).

Residue Thr-7–Lys-12 participates in substrate binding. Residues Glu-38 and Asp-73 each coordinate Mg(2+). Catalysis depends on Asp-73, which acts as the Proton acceptor. Residues Ser-74, Phe-154–Asp-157, Lys-177, and His-182–Arg-183 contribute to the substrate site.

Belongs to the HAM1 NTPase family. In terms of assembly, homodimer. Requires Mg(2+) as cofactor.

The catalysed reaction is XTP + H2O = XMP + diphosphate + H(+). It catalyses the reaction dITP + H2O = dIMP + diphosphate + H(+). The enzyme catalyses ITP + H2O = IMP + diphosphate + H(+). Pyrophosphatase that catalyzes the hydrolysis of nucleoside triphosphates to their monophosphate derivatives, with a high preference for the non-canonical purine nucleotides XTP (xanthosine triphosphate), dITP (deoxyinosine triphosphate) and ITP. Seems to function as a house-cleaning enzyme that removes non-canonical purine nucleotides from the nucleotide pool, thus preventing their incorporation into DNA/RNA and avoiding chromosomal lesions. This is dITP/XTP pyrophosphatase from Campylobacter jejuni subsp. jejuni serotype O:6 (strain 81116 / NCTC 11828).